A 282-amino-acid polypeptide reads, in one-letter code: Hydroxyethylthiazole kinase 2 (282 aa).

Met-44 contributes to the substrate binding site. Residues Arg-120 and Ser-179 each coordinate ATP. Gly-206 contacts substrate.

It belongs to the Thz kinase family. Mg(2+) serves as cofactor.

It catalyses the reaction 5-(2-hydroxyethyl)-4-methylthiazole + ATP = 4-methyl-5-(2-phosphooxyethyl)-thiazole + ADP + H(+). It participates in cofactor biosynthesis; thiamine diphosphate biosynthesis; 4-methyl-5-(2-phosphoethyl)-thiazole from 5-(2-hydroxyethyl)-4-methylthiazole: step 1/1. Functionally, catalyzes the phosphorylation of the hydroxyl group of 4-methyl-5-beta-hydroxyethylthiazole (THZ). This chain is Hydroxyethylthiazole kinase 2, found in Methanosphaera stadtmanae (strain ATCC 43021 / DSM 3091 / JCM 11832 / MCB-3).